A 104-amino-acid polypeptide reads, in one-letter code: 10 kDa heat shock protein, mitochondrial (104 aa).

A Phosphoserine modification is found at Ser81.

This sequence belongs to the GroES chaperonin family. As to quaternary structure, homohexamer.

The protein resides in the mitochondrion matrix. In terms of biological role, eukaryotic CPN10 homolog which is essential for mitochondrial protein biogenesis, together with CPN60. Binds to CPN60 in the presence of Mg-ATP and suppresses the ATPase activity of the latter. In Schizosaccharomyces pombe (strain 972 / ATCC 24843) (Fission yeast), this protein is 10 kDa heat shock protein, mitochondrial (hsp10).